The chain runs to 3033 residues: Genome polyprotein (3033 aa).

Serine 2 is subject to N-acetylserine; by host. The interval 2–23 (STNPKPQRKTKRNTNRRPQDVK) is interaction with STAT1. The segment at 2-58 (STNPKPQRKTKRNTNRRPQDVKFPGGGQIVGGVYLLPRRGPRLGVRATRKTSERSQP) is interaction with EIF2AK2/PKR. Residues 2-59 (STNPKPQRKTKRNTNRRPQDVKFPGGGQIVGGVYLLPRRGPRLGVRATRKTSERSQPR) are interaction with DDX3X. Positions 2–75 (STNPKPQRKT…PKDRRSTGKS (74 aa)) are disordered. Residues 2 to 168 (STNPKPQRKT…EDGVNFATGN (167 aa)) are Cytoplasmic-facing. 2 short sequence motifs (nuclear localization signal) span residues 5–13 (PKPQRKTKR) and 38–43 (PRRGPR). A compositionally biased stretch (basic residues) spans 7–16 (PQRKTKRNTN). The span at 32 to 47 (GGVYLLPRRGPRLGVR) shows a compositional bias: low complexity. Serine 53 carries the post-translational modification Phosphoserine; by host. 2 short sequence motifs (nuclear localization signal) span residues 58–64 (PRGRRQP) and 66–71 (PKDRRS). The residue at position 99 (serine 99) is a Phosphoserine; by host. Residues 112–152 (PRHRSRNVGKVIDTLTCGFADLMGYIPVVGAPLGGVARALA) form an important for endoplasmic reticulum and mitochondrial localization region. A Phosphoserine; by host PKA modification is found at serine 116. Positions 122–173 (VIDTLTCGFADLMGYIPVVGAPLGGVARALAHGVRVLEDGVNFATGNLPGCS) are interaction with APOA2. Residues 164 to 167 (FATG) are important for lipid droplets localization. The chain crosses the membrane as a helical span at residues 169–189 (LPGCSFSIFLLALLSCITTPV). A propeptide spans 178 to 191 (LLALLSCITTPVSA) (ER anchor for the core protein, removed in mature form by host signal peptidase). The Lumenal segment spans residues 190–358 (SAAEVKNIST…GGAHWGVMFG (169 aa)). Residues asparagine 196, asparagine 209, and asparagine 234 are each glycosylated (N-linked (GlcNAc...) asparagine; by host). The interval 265-296 (VVMSATLCSALYVGDLCGGVMLAAQMFIVSPQ) is important for fusion. Asparagine 305 carries an N-linked (GlcNAc...) asparagine; by host glycan. A helical membrane pass occupies residues 359-379 (LAYFSMQGAWAKVVVILLLAA). The Lumenal portion of the chain corresponds to 380–729 (GVDAQTHTVG…WEWVVLLFLL (350 aa)). The HVR1 stretch occupies residues 385–411 (THTVGGSTAHNARTLTGMFSLGARQKI). 4 N-linked (GlcNAc...) (high mannose) asparagine; by host glycosylation sites follow: asparagine 417, asparagine 423, asparagine 430, and asparagine 448. 4 disulfide bridges follow: cysteine 429/cysteine 554, cysteine 452/cysteine 459, cysteine 488/cysteine 496, and cysteine 505/cysteine 510. N-linked (GlcNAc...) (high mannose) asparagine; by host glycosylation is present at asparagine 477. A CD81-binding 1 region spans residues 484–496 (MRPYCWHYPPRQC). Residues 524 to 555 (LGAPTYTWGENETDVFLLNSTRPPQGSWFGCT) form a CD81-binding 2 region. 3 N-linked (GlcNAc...) (high mannose) asparagine; by host glycosylation sites follow: asparagine 534, asparagine 542, and asparagine 558. Residues cysteine 566 and cysteine 571 are joined by a disulfide bond. Asparagine 578 is a glycosylation site (N-linked (GlcNAc...) (high mannose) asparagine; by host). Cystine bridges form between cysteine 585/cysteine 589, cysteine 601/cysteine 624, and cysteine 611/cysteine 648. Residues asparagine 627 and asparagine 649 are each glycosylated (N-linked (GlcNAc...) (high mannose) asparagine; by host). Residues cysteine 656 and cysteine 681 are joined by a disulfide bond. An EIF2AK2/eIF2-alpha phosphorylation homology domain (PePHD) region spans residues 664–675 (SQLSPLLHSTTE). A helical membrane pass occupies residues 730–750 (LADARVCACLWMLILLGQAEA). The Lumenal portion of the chain corresponds to 751-761 (ALEKLVVLHAA). Residues 762-782 (SAASCNGFLYFVIFFVAAWYI) form a helical membrane-spanning segment. Topologically, residues 783-786 (KGRV) are cytoplasmic. Residues 787–807 (VPLATYSLTGLWSFGLLLLAL) form a helical membrane-spanning segment. Residues 808–817 (PQQAYAYDAS) are Lumenal-facing. A helical membrane pass occupies residues 818–838 (VHGQIGAALLVLITLFTLTPG). Over 839-885 (YKTLLSRFLWWLCYLLTLAEAMVQEWAPPMQVRGGRDGIIWAVAIFC) the chain is Cytoplasmic. Residues 886 to 906 (PGVVFDITKWLLAVLGPAYLL) traverse the membrane as a helical segment. The Lumenal portion of the chain corresponds to 907-932 (KGALTRVPYFVRAHALLRMCTMVRHL). The 124-residue stretch at 907–1030 (KGALTRVPYF…GYTSKGWSLL (124 aa)) folds into the Peptidase C18 domain. The tract at residues 908-1210 (GALTRVPYFV…PVETLDIVTR (303 aa)) is protease NS2-3. The S-palmitoyl cysteine; by host moiety is linked to residue cysteine 926. The helical transmembrane segment at 933–953 (AGGRYVQMVLLALGRWTGTYI) threads the bilayer. The interaction with host SCPS1 stretch occupies residues 933–953 (AGGRYVQMVLLALGRWTGTYI). Residues 954-1661 (YDHLTPMSDW…CMQADLEVMT (708 aa)) are Cytoplasmic-facing. Catalysis depends on for protease NS2 activity; shared with dimeric partner residues histidine 956, glutamate 976, and cysteine 997. In terms of domain architecture, Peptidase S29 spans 1031-1212 (APITAYAQQT…ETLDIVTRSP (182 aa)). Residues histidine 1087 and aspartate 1111 each act as charge relay system; for serine protease NS3 activity in the active site. Zn(2+)-binding residues include cysteine 1127 and cysteine 1129. The Charge relay system; for serine protease NS3 activity role is filled by serine 1169. Positions 1175 and 1179 each coordinate Zn(2+). The 153-residue stretch at 1221–1373 (PAVPQTYQVG…PNIEEVALGQ (153 aa)) folds into the Helicase ATP-binding domain. 1234-1241 (APTGSGKS) is an ATP binding site. The Mg(2+) site is built by serine 1241 and glutamate 1321. The short motif at 1320–1323 (DECH) is the DECH box element. Residues 1490–1501 (QRRGRTGRGRLG) form an RNA-binding region. The helical transmembrane segment at 1662–1682 (STWVLAGGVLAAVAAYCLATG) threads the bilayer. The interval 1683-1694 (CVCIIGRLHVNQ) is NS3-binding. The Cytoplasmic portion of the chain corresponds to 1683-1809 (CVCIIGRLHV…ALTSPLSTST (127 aa)). A helical membrane pass occupies residues 1810 to 1830 (TILLNILGGWLASQIAPPAGA). At 1831–1832 (TG) the chain is on the lumenal side. A helical membrane pass occupies residues 1833–1853 (FVVSGLVGAAVGSIGLGKVLV). The segment at 1837 to 1865 (GLVGAAVGSIGLGKVLVDILAGYGAGISG) is glycine zipper. Residue aspartate 1854 is a topological domain, cytoplasmic. Residues 1855-1875 (ILAGYGAGISGALVAFKIMSG) traverse the membrane as a helical segment. The Lumenal segment spans residues 1876-1885 (EKPSMEDVVN). A helical transmembrane segment spans residues 1886 to 1906 (LLPGILSPGALVVGVICAAIL). The Cytoplasmic segment spans residues 1907–1976 (RRHVGPGEGA…WITEDCPIPC (70 aa)). Cysteine 1972 carries the S-palmitoyl cysteine; by host lipid modification. Cysteine 1976 is lipidated: S-palmitoyl cysteine; by host; partial. The stretch at 1977-2007 (SGSWLRDVWDWVCTILTDFKNWLTSKLFPKM) is an intramembrane region. A membrane-binding region spans residues 1982–2002 (RDVWDWVCTILTDFKNWLTSK). The Cytoplasmic segment spans residues 2008–3012 (PGLPFISCQK…YHSVSRARPR (1005 aa)). Residues 2009 to 2225 (GLPFISCQKG…RATCTTHGKA (217 aa)) form an RNA-binding region. Zn(2+)-binding residues include cysteine 2015, cysteine 2033, cysteine 2035, and cysteine 2056. A Phosphotyrosine; by host modification is found at tyrosine 2069. An FKBP8-binding region spans residues 2124–2212 (EFFSWVDGVQ…ASSSASQLSA (89 aa)). The interval 2124–2332 (EFFSWVDGVQ…PTPPPRRRRT (209 aa)) is transcriptional activation. Residues 2139 to 2143 (PIPKP) form an interaction with non-structural protein 4A region. 2 disordered regions span residues 2193 to 2214 (RLAR…SAPS) and 2309 to 2335 (ATVA…TVGL). Residue serine 2198 is modified to Phosphoserine; by host; in p56. The span at 2198-2214 (SPPSEASSSASQLSAPS) shows a compositional bias: low complexity. Serine 2201 carries the phosphoserine; by host; in p58 modification. Serine 2205 is modified (phosphoserine; by host; in p56 and p58, regulates intracellular NS5A distribution). 3 positions are modified to phosphoserine; by host; in p58: serine 2208, serine 2211, and serine 2214. The ISDR stretch occupies residues 2210–2249 (LSAPSLRATCTTHGKAYDVDMVDANLFMGGDVTRIESESK). The segment at 2214-2275 (SLRATCTTHG…LEPSIPSEYM (62 aa)) is interaction with EIF2AK2/PKR. Residues 2253 to 2310 (LDSLDPMVEERSDLEPSIPSEYMLPKKRFPPALPAWARPDYNPPLVESWKRPDYQPAT) form an NS4B-binding region. Pro residues predominate over residues 2316 to 2326 (LPPPKKTPTPP). The short motif at 2322-2325 (TPTP) is the SH3-binding element. Threonine 2324 carries the post-translational modification Phosphothreonine; by host. Residues 2326–2334 (PPRRRRTVG) carry the Nuclear localization signal motif. The interaction with host IFI27 stretch occupies residues 2336–2447 (SESSIADALQ…SVVCCSMSYS (112 aa)). Lysine 2350 participates in a covalent cross-link: Glycyl lysine isopeptide (Lys-Gly) (interchain with G-Cter in ubiquitin). The segment at 2351–2431 (SFGQPPPSGD…PGSGSGSWST (81 aa)) is disordered. The V3 stretch occupies residues 2358-2381 (SGDSGLSTGADAADSGSRTPPDEL). The segment covering 2398–2408 (EPGDPDLEPEQ) has biased composition (acidic residues). Residues 2417-2431 (GGVVTPGSGSGSWST) show a composition bias toward low complexity. The RdRp catalytic domain occupies 2656–2774 (PMGFSYDTRC…ISESQGTEED (119 aa)). Positions 2662, 2760, and 2761 each coordinate Mg(2+). The chain crosses the membrane as a helical span at residues 3013 to 3033 (LLLLGLLLLFVGVGLFLLPAR).

The protein belongs to the hepacivirus polyprotein family. Homooligomer. Interacts with E1 (via C-terminus). Interacts with the non-structural protein 5A. Interacts (via N-terminus) with host STAT1 (via SH2 domain); this interaction results in decreased STAT1 phosphorylation and ubiquitin-mediated proteasome-dependent STAT1 degradation, leading to decreased IFN-stimulated gene transcription. Interacts with host STAT3; this interaction constitutively activates STAT3. Interacts with host LTBR receptor. Interacts with host TNFRSF1A receptor and possibly induces apoptosis. Interacts with host HNRPK. Interacts with host YWHAE. Interacts with host UBE3A/E6AP. Interacts with host DDX3X. Interacts with host APOA2. Interacts with host RXRA protein. Interacts with host SP110 isoform 3/Sp110b; this interaction sequesters the transcriptional corepressor SP110 away from the nucleus. Interacts with host CREB3 nuclear transcription protein; this interaction triggers cell transformation. Interacts with host ACY3. Interacts with host C1QR1. Interacts with host RBM24; this interaction, which enhances the interaction of the mature core protein with 5'-UTR, may inhibit viral translation and favor replication. Interacts with host EIF2AK2/PKR; this interaction induces the autophosphorylation of EIF2AK2. Part of the viral assembly initiation complex composed of NS2, E1, E2, NS3, NS4A, NS5A and the mature core protein. As to quaternary structure, forms a heterodimer with envelope glycoprotein E2. Interacts with mature core protein. Interacts with protease NS2. The heterodimer E1/E2 interacts with host CLDN1; this interaction plays a role in viral entry into host cell. Interacts with host SPSB2 (via C-terminus). Part of the viral assembly initiation complex composed of NS2, E1, E2, NS3, NS4A, NS5A and the mature core protein. Interacts with host NEURL3; this interaction prevents E1 binding to glycoprotein E2. In terms of assembly, forms a heterodimer with envelope glycoprotein E1. Interacts with host CD81 and SCARB1 receptors; this interaction may play a role in viral entry into host cell. Interacts with host EIF2AK2/PKR; this interaction inhibits EIF2AK2 and probably allows the virus to evade the innate immune response. Interacts with host CD209/DC-SIGN and CLEC4M/DC-SIGNR. Interact with host SPCS1; this interaction is essential for viral particle assembly. Interacts with protease NS2. The heterodimer E1/E2 interacts with host CLDN1; this interaction plays a role in viral entry into host cell. Part of the viral assembly initiation complex composed of NS2, E1, E2, NS3, NS4A, NS5A and the mature core protein. Interacts with host SLC3A2/4F2hc; the interaction may facilitate viral entry into host cell. Interacts with human PLSCR1. Homohexamer. Homoheptamer. Interacts with protease NS2. As to quaternary structure, homodimer. Interacts with host SPCS1; this interaction is essential for viral particle assembly. Interacts with envelope glycoprotein E1. Interacts with envelope glycoprotein E2. Interacts with viroporin p7. Interacts with serine protease/helicase NS3. Part of the replication complex composed of NS2, NS3, NS4A, NS4B, NS5A and the RNA-directed RNA polymerase embedded in an ER-derived membranous web. Part of the viral assembly initiation complex composed of NS2, E1, E2, NS3, NS4A, NS5A and the mature core protein. In terms of assembly, interacts with protease NS2. Interacts with non-structural protein 4A; this interaction stabilizes the folding of NS3 serine protease. NS3-NS4A interaction is essential for NS3 activation and allows membrane anchorage of the latter. NS3/NS4A complex also prevents phosphorylation of host IRF3, thus preventing the establishment of dsRNA induced antiviral state. Interacts with host MAVS; this interaction leads to the cleavage and inhibition of host MAVS. Interacts with host TICAM1; this interaction leads to the cleavage and inhibition of host TICAM1. Interacts with host TANK-binding kinase/TBK1; this interaction results in the inhibition of the association between TBK1 and IRF3, which leads to the inhibition of IRF3 activation. Interacts with host RBM24. Part of the replication complex composed of NS2, NS3, NS4A, NS4B, NS5A and the RNA-directed RNA polymerase embedded in an ER-derived membranous web. Part of the viral assembly initiation complex composed of NS2, E1, E2, NS3, NS4A, NS5A and the mature core protein. Interacts with NS3 serine protease; this interaction stabilizes the folding of NS3 serine protease. NS3-NS4A interaction is essential for NS3 activation and allows membrane anchorage of the latter. Interacts with non-structural protein 5A (via N-terminus). Part of the replication complex composed of NS2, NS3, NS4A, NS4B, NS5A and the RNA-directed RNA polymerase embedded in an ER-derived membranous web. Part of the viral assembly initiation complex composed of NS2, E1, E2, NS3, NS4A, NS5A and the mature core protein. As to quaternary structure, homomultimer. Interacts with non-structural protein NS5A. Interacts with host PLA2G4C; this interaction likely initiates the recruitment of replication complexes to lipid droplets. Interacts with host STING; this interaction disrupts the interaction between STING and TBK1 thereby suppressing the interferon signaling. Part of the replication complex composed of NS2, NS3, NS4A, NS4B, NS5A and the RNA-directed RNA polymerase embedded in an ER-derived membranous web. In terms of assembly, monomer. Homodimer; dimerization is required for RNA-binding. Interacts with the mature core protein. Interacts (via N-terminus) with non-structural protein 4A. Interacts with non-structural protein 4B. Interacts (via region D2) with RNA-directed RNA polymerase. Part of the viral assembly initiation complex composed of NS2, E1, E2, NS3, NS4A, NS5A and the mature core protein. Part of the replication complex composed of NS2, NS3, NS4A, NS4B, NS5A and the RNA-directed RNA polymerase embedded in an ER-derived membranous web. Interacts with host GRB2. Interacts with host BIN1. Interacts with host PIK3R1. Interacts with host SRCAP. Interacts with host FKBP8. Interacts (via C-terminus) with host VAPB (via MSP domain). Interacts with host EIF2AK2/PKR; this interaction leads to disruption of EIF2AK2 dimerization by NS5A and probably allows the virus to evade the innate immune response. Interacts (via N-terminus) with host PACSIN2 (via N-terminus); this interaction attenuates protein kinase C alpha-mediated phosphorylation of PACSIN2 by disrupting the interaction between PACSIN2 and PRKCA. Interacts (via N-terminus) with host SRC kinase (via SH2 domain). Interacts with most Src-family kinases. Interacts with host IFI27 and SKP2; promotes the ubiquitin-mediated proteasomal degradation of NS5A. Interacts with host GPS2. Interacts with host TNFRSF21; this interaction allows the modulation by the virus of JNK, p38 MAPK, STAT3, and Akt signaling pathways in a DR6-dependent manner. Interacts (via N-terminus) with host CIDEB (via N-terminus); this interaction seems to regulate the association of HCV particles with APOE. Interacts with host CHKA/Choline Kinase-alpha; CHKA bridges host PI4KA and NS5A and potentiates NS5A-stimulated PI4KA activity, which then facilitates the targeting of the ternary complex to the ER for viral replication. Interacts with host SPSB2 (via C-terminus); this interaction targets NS5A for ubiquitination and degradation. Interacts with host RAB18; this interaction may promote the association of NS5A and other replicase components with lipid droplets. Interacts (via region D2) with host PPIA/CYPA; the interaction stimulates RNA-binding ability of NS5A and is dependent on the peptidyl-prolyl cis-trans isomerase activity of PPIA/CYPA. Interacts with host TRIM14; this interaction induces the degradation of NS5A. Homooligomer. Interacts with non-structural protein 5A. Interacts with host VAPB. Interacts with host PRK2/PKN2. Interacts with host HNRNPA1 and SEPT6; these interactions facilitate viral replication. Part of the replication complex composed of NS2, NS3, NS4A, NS4B, NS5A and the RNA-directed RNA polymerase. Zn(2+) serves as cofactor. It depends on Mg(2+) as a cofactor. In terms of processing, specific enzymatic cleavages in vivo yield mature proteins. The structural proteins, core, E1, E2 and p7 are produced by proteolytic processing by host signal peptidases. The core protein precursor is synthesized as a 23 kDa, which is retained in the ER membrane through the hydrophobic signal peptide. Cleavage by the signal peptidase releases the 21 kDa mature core protein. The cleavage of the core protein precursor occurs between aminoacids 176 and 188 but the exact cleavage site is not known. Some degraded forms of the core protein appear as well during the course of infection. The other proteins (p7, NS2, NS3, NS4A, NS4B, NS5A and NS5B) are cleaved by the viral proteases. Autoprocessing between NS2 and NS3 is mediated by the NS2 cysteine protease catalytic domain and regulated by the NS3 N-terminal domain. Post-translationally, phosphorylated by host PKC and PKA. Ubiquitinated; mediated by UBE3A and leading to core protein subsequent proteasomal degradation. In terms of processing, highly N-glycosylated. Post-translationally, palmitoylation is required for NS2/3 autoprocessing and E2 recruitment to membranes. Palmitoylated. This modification may play a role in its polymerization or in protein-protein interactions. In terms of processing, phosphorylated on serines in a basal form termed p56. p58 is a hyperphosphorylated form of p56. p56 and p58 coexist in the cell in roughly equivalent amounts. Hyperphosphorylation is dependent on the presence of NS4A. Host CSNK1A1/CKI-alpha or RPS6KB1 kinases may be responsible for NS5A phosphorylation. Post-translationally, tyrosine phosphorylation is essential for the interaction with host SRC. The N-terminus is phosphorylated by host PRK2/PKN2.

It is found in the host endoplasmic reticulum membrane. The protein resides in the host mitochondrion membrane. It localises to the virion. The protein localises to the host cytoplasm. Its subcellular location is the host nucleus. It is found in the host lipid droplet. The protein resides in the virion membrane. It localises to the host mitochondrion. The protein localises to the host cell membrane. Its subcellular location is the host perinuclear region. It carries out the reaction Hydrolysis of four peptide bonds in the viral precursor polyprotein, commonly with Asp or Glu in the P6 position, Cys or Thr in P1 and Ser or Ala in P1'.. It catalyses the reaction a ribonucleoside 5'-triphosphate + H2O = a ribonucleoside 5'-diphosphate + phosphate + H(+). The catalysed reaction is ATP + H2O = ADP + phosphate + H(+). The enzyme catalyses RNA(n) + a ribonucleoside 5'-triphosphate = RNA(n+1) + diphosphate. Its activity is regulated as follows. Inhibited by the antiviral drug hexamethylene amiloride. Inhibition by amantadine appears to be genotype-dependent. Also inhibited by long-alkyl-chain iminosugar derivatives. Activity is up-regulated by PRK2/PKN2-mediated phosphorylation. Functionally, packages viral RNA to form a viral nucleocapsid, and promotes virion budding. Participates in the viral particle production as a result of its interaction with the non-structural protein 5A. Binds RNA and may function as a RNA chaperone to induce the RNA structural rearrangements taking place during virus replication. Modulates viral translation initiation by interacting with viral IRES and 40S ribosomal subunit. Affects various cell signaling pathways, host immunity and lipid metabolism. Prevents the establishment of cellular antiviral state by blocking the interferon-alpha/beta (IFN-alpha/beta) and IFN-gamma signaling pathways and by blocking the formation of phosphorylated STAT1 and promoting ubiquitin-mediated proteasome-dependent degradation of STAT1. Activates STAT3 leading to cellular transformation. Regulates the activity of cellular genes, including c-myc and c-fos. May repress the promoter of p53, and sequester CREB3 and SP110 isoform 3/Sp110b in the cytoplasm. Represses cell cycle negative regulating factor CDKN1A, thereby interrupting an important check point of normal cell cycle regulation. Targets transcription factors involved in the regulation of inflammatory responses and in the immune response: suppresses TNF-induced NF-kappa-B activation, and activates AP-1. Binds to dendritic cells (DCs) via C1QR1, resulting in down-regulation of T-lymphocytes proliferation. Alters lipid metabolism by interacting with hepatocellular proteins involved in lipid accumulation and storage. Induces up-regulation of FAS promoter activity, and thereby contributes to the increased triglyceride accumulation in hepatocytes (steatosis). Its function is as follows. Forms a heterodimer with envelope glycoprotein E2, which mediates virus attachment to the host cell, virion internalization through clathrin-dependent endocytosis and fusion with host membrane. Fusion with the host cell is most likely mediated by both E1 and E2, through conformational rearrangements of the heterodimer required for fusion rather than a classical class II fusion mechanism. E1/E2 heterodimer binds host apolipoproteins such as APOB and APOE thereby forming a lipo-viro-particle (LVP). APOE associated to the LVP allows the initial virus attachment to cell surface receptors such as the heparan sulfate proteoglycans (HSPGs), syndecan-1 (SDC1), syndecan-1 (SDC2), the low-density lipoprotein receptor (LDLR) and scavenger receptor class B type I (SCARB1). The cholesterol transfer activity of SCARB1 allows E2 exposure and binding of E2 to SCARB1 and the tetraspanin CD81. E1/E2 heterodimer binding on CD81 activates the epithelial growth factor receptor (EGFR) signaling pathway. Diffusion of the complex E1-E2-EGFR-SCARB1-CD81 to the cell lateral membrane allows further interaction with Claudin 1 (CLDN1) and occludin (OCLN) to finally trigger HCV entry. Forms a heterodimer with envelope glycoprotein E1, which mediates virus attachment to the host cell, virion internalization through clathrin-dependent endocytosis and fusion with host membrane. Fusion with the host cell is most likely mediated by both E1 and E2, through conformational rearrangements of the heterodimer required for fusion rather than a classical class II fusion mechanism. The interaction between envelope glycoprotein E2 and host apolipoprotein E/APOE allows the proper assembly, maturation and infectivity of the viral particles. This interaction is probably promoted via the up-regulation of cellular autophagy by the virus. E1/E2 heterodimer binds host apolipoproteins such as APOB and APOE thereby forming a lipo-viro-particle (LVP). APOE associated to the LVP allows the initial virus attachment to cell surface receptors such as the heparan sulfate proteoglycans (HSPGs), syndecan-1 (SDC1), syndecan-1 (SDC2), the low-density lipoprotein receptor (LDLR) and scavenger receptor class B type I (SCARB1). The cholesterol transfer activity of SCARB1 allows E2 exposure and binding of E2 to SCARB1 and the tetraspanin CD81. E1/E2 heterodimer binding on CD81 activates the epithelial growth factor receptor (EGFR) signaling pathway. Diffusion of the complex E1-E2-EGFR-SCARB1-CD81 to the cell lateral membrane allows further interaction with Claudin 1 (CLDN1) and occludin (OCLN) to finally trigger HCV entry. Inhibits host EIF2AK2/PKR activation, preventing the establishment of an antiviral state. Viral ligand for CD209/DC-SIGN and CLEC4M/DC-SIGNR, which are respectively found on dendritic cells (DCs), and on liver sinusoidal endothelial cells and macrophage-like cells of lymph node sinuses. These interactions allow the capture of circulating HCV particles by these cells and subsequent facilitated transmission to permissive cells such as hepatocytes and lymphocyte subpopulations. The interaction between E2 and host amino acid transporter complex formed by SLC3A2 and SLC7A5/LAT1 may facilitate viral entry into host cell. In terms of biological role, ion channel protein that acts as a viroporin and plays an essential role in the assembly, envelopment and secretion of viral particles. Regulates the host cell secretory pathway, which induces the intracellular retention of viral glycoproteins and favors assembly of viral particles. Creates a pore in acidic organelles and releases Ca(2+) and H(+) in the cytoplasm of infected cells, leading to a productive viral infection. High levels of cytoplasmic Ca(2+) may trigger membrane trafficking and transport of viral ER-associated proteins to viroplasms, sites of viral genome replication. This ionic imbalance induces the assembly of the inflammasome complex, which triggers the maturation of pro-IL-1beta into IL-1beta through the action of caspase-1. Targets also host mitochondria and induces mitochondrial depolarization. In addition of its role as a viroporin, acts as a lipid raft adhesion factor. Functionally, cysteine protease required for the proteolytic auto-cleavage between the non-structural proteins NS2 and NS3. The N-terminus of NS3 is required for the function of NS2 protease (active region NS2-3). Promotes the initiation of viral particle assembly by mediating the interaction between structural and non-structural proteins. Its function is as follows. Displays three enzymatic activities: serine protease with a chymotrypsin-like fold, NTPase and RNA helicase. NS3 serine protease, in association with NS4A, is responsible for the cleavages of NS3-NS4A, NS4A-NS4B, NS4B-NS5A and NS5A-NS5B. The NS3/NS4A complex prevents phosphorylation of host IRF3, thus preventing the establishment of dsRNA induced antiviral state. The NS3/NS4A complex induces host amino acid transporter component SLC3A2, thus contributing to HCV propagation. NS3 RNA helicase binds to RNA and unwinds both dsDNA and dsRNA in the 3' to 5' direction, and likely resolves RNA complicated stable secondary structures in the template strand. Binds a single ATP and catalyzes the unzipping of a single base pair of dsRNA. Inhibits host antiviral proteins TBK1 and IRF3 thereby preventing the establishment of an antiviral state. Cleaves host MAVS/CARDIF thereby preventing the establishment of an antiviral state. Cleaves host TICAM1/TRIF, thereby disrupting TLR3 signaling and preventing the establishment of an antiviral state. Induces a specific membrane alteration that serves as a scaffold for the virus replication complex. This membrane alteration gives rise to the so-called ER-derived membranous web that contains the replication complex. NS4B self-interaction contributes to its function in membranous web formation. Promotes host TRIF protein degradation in a CASP8-dependent manner thereby inhibiting host TLR3-mediated interferon signaling. Disrupts the interaction between STING and TBK1 contributing to the inhibition of interferon signaling. In terms of biological role, phosphorylated protein that is indispensable for viral replication and assembly. Both hypo- and hyperphosphorylated states are required for the viral life cycle. The hyperphosphorylated form of NS5A is an inhibitor of viral replication. Involved in RNA-binding and especially in binding to the viral genome. Zinc is essential for RNA-binding. Participates in the viral particle production as a result of its interaction with the mature viral core protein. Its interaction with host VAPB may target the viral replication complex to vesicles. Down-regulates viral IRES translation initiation. Mediates interferon resistance, presumably by interacting with and inhibiting host EIF2AK2/PKR. Prevents BIN1-induced apoptosis. Acts as a transcriptional activator of some host genes important for viral replication when localized in the nucleus. Via the interaction with host PACSIN2, modulates lipid droplet formation in order to promote virion assembly. Modulates TNFRSF21/DR6 signaling pathway for viral propagation. Functionally, RNA-dependent RNA polymerase that performs primer-template recognition and RNA synthesis during viral replication. Initiates RNA transcription/replication at a flavin adenine dinucleotide (FAD), resulting in a 5'- FAD cap on viral RNAs. In this way, recognition of viral 5' RNA by host pattern recognition receptors can be bypassed, thereby evading activation of antiviral pathways. This is Genome polyprotein from Homo sapiens (Human).